The sequence spans 357 residues: Carbamoyl phosphate synthase small chain (357 aa).

Positions 1–168 are CPSase; sequence MSKRLLILED…STTTAYPSPN (168 aa). L-glutamine contacts are provided by S46, G220, and G222. The Glutamine amidotransferase type-1 domain occupies 172 to 357; the sequence is KVVVVDFGLK…FMDLMDNFKK (186 aa). The active-site Nucleophile is the C247. L-glutamine-binding residues include L248, Q251, N289, G291, and Y292. Catalysis depends on residues H331 and D333.

Belongs to the CarA family. As to quaternary structure, composed of two chains; the small (or glutamine) chain promotes the hydrolysis of glutamine to ammonia, which is used by the large (or ammonia) chain to synthesize carbamoyl phosphate. Tetramer of heterodimers (alpha,beta)4.

It carries out the reaction hydrogencarbonate + L-glutamine + 2 ATP + H2O = carbamoyl phosphate + L-glutamate + 2 ADP + phosphate + 2 H(+). It catalyses the reaction L-glutamine + H2O = L-glutamate + NH4(+). Its pathway is amino-acid biosynthesis; L-arginine biosynthesis; carbamoyl phosphate from bicarbonate: step 1/1. It participates in pyrimidine metabolism; UMP biosynthesis via de novo pathway; (S)-dihydroorotate from bicarbonate: step 1/3. Small subunit of the glutamine-dependent carbamoyl phosphate synthetase (CPSase). CPSase catalyzes the formation of carbamoyl phosphate from the ammonia moiety of glutamine, carbonate, and phosphate donated by ATP, constituting the first step of 2 biosynthetic pathways, one leading to arginine and/or urea and the other to pyrimidine nucleotides. The small subunit (glutamine amidotransferase) binds and cleaves glutamine to supply the large subunit with the substrate ammonia. The chain is Carbamoyl phosphate synthase small chain from Lactococcus lactis subsp. lactis (strain IL1403) (Streptococcus lactis).